Reading from the N-terminus, the 271-residue chain is N-acetylaspartate synthetase (271 aa).

Residues 1–38 are disordered; the sequence is MTYRGTRKSPCCSPPPRCGPPLPSGPAGSALGPPSSGA. Over residues 12–24 the composition is skewed to pro residues; the sequence is CSPPPRCGPPLPS. The segment covering 25-37 has biased composition (low complexity); sequence GPAGSALGPPSSG. A helical transmembrane segment spans residues 89-109; the sequence is VYAVIIIMCFVVTKSLLVTCC. An N-acetyltransferase domain is found at 115–258; that stretch reads LGMRYYYSRK…HSLLERLFFQ (144 aa).

Belongs to the NAT8 family.

It localises to the cytoplasm. It is found in the microsome membrane. The protein resides in the mitochondrion membrane. The protein localises to the endoplasmic reticulum membrane. It catalyses the reaction L-aspartate + acetyl-CoA = N-acetyl-L-aspartate + CoA + H(+). Its function is as follows. Catalyzes the synthesis of N-acetylaspartate acid (NAA) from L-aspartate and acetyl-CoA. This is N-acetylaspartate synthetase (nat8l) from Xenopus tropicalis (Western clawed frog).